The primary structure comprises 264 residues: Undecaprenyl-diphosphatase (264 aa).

8 helical membrane-spanning segments follow: residues 15 to 37 (GLTEFLPVSSTGHLIITGHLLGF), 42 to 62 (AASFEVAIQLGAILAVVVLYW), 84 to 104 (YLLFLTSLPASVLGLLAHDFI), 108 to 128 (LFNPYTVAWALGVGAIMILIV), 143 to 163 (VTPKLALGIGCFQCLALWPGF), 182 to 202 (IAAEYSFIAAVPIMFAATGYD), 217 to 237 (FLAVGFIVSFLSAWAAVKGFI), and 243 to 263 (LTLRPFAYYRLALAPLVLFFW).

The protein belongs to the UppP family.

It is found in the cell inner membrane. It carries out the reaction di-trans,octa-cis-undecaprenyl diphosphate + H2O = di-trans,octa-cis-undecaprenyl phosphate + phosphate + H(+). Its function is as follows. Catalyzes the dephosphorylation of undecaprenyl diphosphate (UPP). Confers resistance to bacitracin. In Maridesulfovibrio salexigens (strain ATCC 14822 / DSM 2638 / NCIMB 8403 / VKM B-1763) (Desulfovibrio salexigens), this protein is Undecaprenyl-diphosphatase.